Here is a 358-residue protein sequence, read N- to C-terminus: Feruloyl esterase B (358 aa).

An N-terminal signal peptide occupies residues 1-18 (MAIPLVLLLAWLLPTVFA). Residues 19 to 291 (ASLTQVSNFG…VSVVLDWFGI (273 aa)) form a catalytic region. Catalysis depends on Ser-136, which acts as the Charge relay system. Residues Asn-179 and Asn-246 are each glycosylated (N-linked (GlcNAc...) asparagine). A gly/Thr-rich linker region spans residues 292-321 (TGGGGGNGGGSGSTTTTTSATTTSTGPTGG). Residues 297–318 (GNGGGSGSTTTTTSATTTSTGP) form a disordered region. Positions 304-318 (STTTTTSATTTSTGP) are enriched in low complexity. A CBM1 domain is found at 322-358 (CTAAHWDQCGGNGYTGCTSCASPYTCQKVNDYYSQCL).

This sequence belongs to the carbohydrate esterase 1 (CE1) family. Feruloyl esterase type B subfamily.

Its subcellular location is the secreted. The enzyme catalyses feruloyl-polysaccharide + H2O = ferulate + polysaccharide.. Its function is as follows. Involved in degradation of plant cell walls. Hydrolyzes the feruloyl-arabinose ester bond in arabinoxylans as well as the feruloyl-galactose and feruloyl-arabinose ester bonds in pectin. Active against methyl esters of caffeate (MCA), but not sinapate (MSA). This chain is Feruloyl esterase B (faeB), found in Talaromyces stipitatus (strain ATCC 10500 / CBS 375.48 / QM 6759 / NRRL 1006) (Penicillium stipitatum).